Reading from the N-terminus, the 458-residue chain is Cysteine--tRNA ligase (458 aa).

Position 28 (cysteine 28) interacts with Zn(2+). The 'HIGH' region motif lies at valine 30 to histidine 40. Zn(2+) is bound by residues cysteine 209, histidine 234, and glutamate 238. Residues lysine 266–serine 270 carry the 'KMSKS' region motif. Lysine 269 lines the ATP pocket.

Belongs to the class-I aminoacyl-tRNA synthetase family. In terms of assembly, monomer. The cofactor is Zn(2+).

It is found in the cytoplasm. The catalysed reaction is tRNA(Cys) + L-cysteine + ATP = L-cysteinyl-tRNA(Cys) + AMP + diphosphate. This chain is Cysteine--tRNA ligase, found in Mannheimia succiniciproducens (strain KCTC 0769BP / MBEL55E).